A 506-amino-acid polypeptide reads, in one-letter code: Maturase K (506 aa).

This sequence belongs to the intron maturase 2 family. MatK subfamily.

The protein localises to the plastid. Its subcellular location is the chloroplast. Its function is as follows. Usually encoded in the trnK tRNA gene intron. Probably assists in splicing its own and other chloroplast group II introns. In Wisteria frutescens (American wisteria), this protein is Maturase K.